The primary structure comprises 339 residues: 4-hydroxythreonine-4-phosphate dehydrogenase (339 aa).

Residues H141 and T142 each coordinate substrate. A divalent metal cation contacts are provided by H171, H215, and H270. Substrate contacts are provided by K278, N287, and R296.

The protein belongs to the PdxA family. Homodimer. The cofactor is Zn(2+). Requires Mg(2+) as cofactor. Co(2+) serves as cofactor.

It localises to the cytoplasm. The catalysed reaction is 4-(phosphooxy)-L-threonine + NAD(+) = 3-amino-2-oxopropyl phosphate + CO2 + NADH. The protein operates within cofactor biosynthesis; pyridoxine 5'-phosphate biosynthesis; pyridoxine 5'-phosphate from D-erythrose 4-phosphate: step 4/5. Its function is as follows. Catalyzes the NAD(P)-dependent oxidation of 4-(phosphooxy)-L-threonine (HTP) into 2-amino-3-oxo-4-(phosphooxy)butyric acid which spontaneously decarboxylates to form 3-amino-2-oxopropyl phosphate (AHAP). The polypeptide is 4-hydroxythreonine-4-phosphate dehydrogenase (Geobacter metallireducens (strain ATCC 53774 / DSM 7210 / GS-15)).